Reading from the N-terminus, the 387-residue chain is Beta-citrylglutamate synthase B (387 aa).

In terms of domain architecture, ATP-grasp spans F119–A304. Residues K158, Q193 to D203, and R219 contribute to the ATP site. Mg(2+) is bound by residues D264, E277, and N279. The Mn(2+) site is built by D264, E277, and N279. The segment at A325–R361 is disordered. The segment covering A337–D352 has biased composition (low complexity).

Belongs to the RimK family. Mg(2+) serves as cofactor. Mn(2+) is required as a cofactor. In terms of tissue distribution, strongly expressed in brain and testis. Expressed in eyes, thymus, lung, kidney, skeletal muscle, spleen, skin and heart. Expressed in neurons of the neocortex, the gray matter and Purkinje cells.

It localises to the cytoplasm. The enzyme catalyses citrate + L-glutamate + ATP = beta-citrylglutamate + ADP + phosphate + H(+). It carries out the reaction N-acetyl-L-aspartate + L-glutamate + ATP = N-acetyl-L-aspartyl-L-glutamate + ADP + phosphate + H(+). Functionally, catalyzes the synthesis of beta-citryl-L-glutamate and N-acetyl-L-aspartyl-L-glutamate. Beta-citryl-L-glutamate is synthesized more efficiently than N-acetyl-L-aspartyl-L-glutamate. In Mus musculus (Mouse), this protein is Beta-citrylglutamate synthase B (Rimklb).